Here is a 408-residue protein sequence, read N- to C-terminus: Subtilisin-like protease 6 (408 aa).

An N-terminal signal peptide occupies residues M1–G20. The propeptide occupies A21–I123. The Inhibitor I9 domain occupies K36–K119. Residues S131 to K408 enclose the Peptidase S8 domain. Catalysis depends on charge relay system residues D163 and H194. Residues N248, N260, and N345 are each glycosylated (N-linked (GlcNAc...) asparagine). Catalysis depends on S354, which acts as the Charge relay system. N404 is a glycosylation site (N-linked (GlcNAc...) asparagine).

This sequence belongs to the peptidase S8 family.

The protein resides in the secreted. Its function is as follows. Secreted subtilisin-like serine protease with keratinolytic activity that contributes to pathogenicity. This is Subtilisin-like protease 6 (SUB6) from Arthroderma gypseum (strain ATCC MYA-4604 / CBS 118893) (Microsporum gypseum).